A 1544-amino-acid chain; its full sequence is GATOR complex protein Iml1 (1544 aa).

Disordered stretches follow at residues 615–649 (QAVPAKPTQAGQQRPLQQTQSNNNNDQEDYGCENG) and 1037–1072 (RRHSTSIISRPQPNQGLTNSPFRERVGSNRLPEKRP). Polar residues-rich tracts occupy residues 623 to 639 (QAGQQRPLQQTQSNNNN) and 1041 to 1057 (TSIISRPQPNQGLTNSP). Residues 1058 to 1072 (FRERVGSNRLPEKRP) show a composition bias toward basic and acidic residues.

It belongs to the IML1 family. Component of the GATOR complex consisting of mio, Nup44A/Seh1, Im11, Nplr3, Nplr2, Wdr24, Wdr59 and Sec13. Within the GATOR complex, probable component of the GATOR1 subcomplex which is likely composed of Iml1, Nplr2 and Nplr3.

In terms of biological role, an essential component of the GATOR subcomplex GATOR1 which functions as an inhibitor of the amino acid-sensing branch of the TORC1 signaling pathway. The two GATOR subcomplexes, GATOR1 and GATOR2, regulate the TORC1 pathway in order to mediate metabolic homeostasis, female gametogenesis and the response to amino acid limitation and complete starvation. The function of GATOR1 in negatively regulating the TORC1 pathway is essential for maintaining baseline levels of TORC1 activity under nutrient rich conditions, and for promoting survival during amino acid or complete starvation by inhibiting TORC1-dependent cell growth and promoting catabolic metabolism and autophagy. GATOR1 and GATOR2 act at different stages of oogenesis to regulate TORC1 in order to control meiotic entry and promote oocyte growth and development. After exactly four mitotic cyst divisions, the GATOR1 complex members (Iml1, Nprl2 and Nprl3) down-regulate TORC1 to slow cellular metabolism and promote the mitotic/meiotic transition. At later stages of oogenesis, the mio and Nup44A components of the GATOR2 complex inhibit GATOR1 and thus activate TORC1 to promote meiotic progression, and drive oocyte growth and development. The sequence is that of GATOR complex protein Iml1 from Drosophila melanogaster (Fruit fly).